The chain runs to 372 residues: Oxidoreductase ptaL (372 aa).

The signal sequence occupies residues 1 to 16 (MKHIVIIGGGFAGVST). 6-hydroxy-FAD is bound by residues 8 to 12 (GGGFA) and R51. N-linked (GlcNAc...) asparagine glycosylation occurs at N251. A 6-hydroxy-FAD-binding site is contributed by D285.

It belongs to the FAD-dependent oxidoreductase family. The cofactor is 6-hydroxy-FAD.

It functions in the pathway secondary metabolite biosynthesis. Its function is as follows. Oxidoreductase; part of the gene cluster that mediates the biosynthesis of pestheic acid, a diphenyl ether which is a biosynthetic precursor of the unique chloropupukeananes. The biosynthesis initiates from condensation of acetate and malonate units catalyzed by the non-reducing PKS ptaA. As the ptaA protein is TE/CLC domain-deficient, hydrolysis and Claisen cyclization of the polyketide could be catalyzed by ptaB containing a beta-lactamase domain. The ptaB protein might hydrolyze the thioester bond between the ACP of ptaA and the intermediate to release atrochrysone carboxylic acid, which is spontaneously dehydrated to form endocrocin anthrone. Endocrocin anthrone is then converted to endocrocin, catalyzed by the anthrone oxygenase ptaC. Spontaneous decarboxylation of endocrocin occurs to generate emodin. An O-methyltransferase (ptaH or ptaI) could methylate emodin to form physcion. PtaJ could then catalyze the oxidative cleavage of physcion, and rotation of the intermediate could then afford desmethylisosulochrin. PtaF, a putative NADH-dependent oxidoreductase, might also participate in the oxidative cleavage step. Desmethylisosulochrin is then transformed by another O-methyltransferase (ptaH or ptaI) to form isosulochrin. Chlorination of isosulochrin by ptaM in the cyclohexadienone B ring then produces chloroisosulochrin. PtaE is responsible for the oxidative coupling reactions of both benzophenones isosulochrin and chloroisosulochrin to RES-1214-1 and pestheic acid respectively, regardless of chlorination. This Pestalotiopsis fici (strain W106-1 / CGMCC3.15140) protein is Oxidoreductase ptaL.